The chain runs to 150 residues: Aspartate carbamoyltransferase regulatory chain (150 aa).

Zn(2+) is bound by residues cysteine 105, cysteine 110, cysteine 133, and cysteine 136.

The protein belongs to the PyrI family. In terms of assembly, contains catalytic and regulatory chains. Zn(2+) is required as a cofactor.

Involved in allosteric regulation of aspartate carbamoyltransferase. The chain is Aspartate carbamoyltransferase regulatory chain from Thermococcus sibiricus (strain DSM 12597 / MM 739).